Here is a 412-residue protein sequence, read N- to C-terminus: Ornithine cyclodeaminase (412 aa).

NAD(+) is bound by residues asparagine 237, alanine 238, aspartate 316, threonine 348, methionine 349, leucine 350, histidine 351, aspartate 369, aspartate 392, and valine 393.

This sequence belongs to the AgrE/ArgZ ornithine cyclodeaminase family. It depends on NAD(+) as a cofactor.

The enzyme catalyses L-ornithine = L-proline + NH4(+). Functionally, catalyzes the conversion of ornithine to proline, with the release of ammonia. The polypeptide is Ornithine cyclodeaminase (Methanopyrus kandleri (strain AV19 / DSM 6324 / JCM 9639 / NBRC 100938)).